We begin with the raw amino-acid sequence, 442 residues long: GTPase HflX (442 aa).

One can recognise a Hflx-type G domain in the interval 186–362 (VLVALAGYTN…ALNRVVLKLP (177 aa)). Residues 192–199 (GYTNAGKS), 217–221 (FTTLD), 238–241 (DTVG), 306–309 (NKID), and 341–343 (SAR) each bind GTP. Residues serine 199 and threonine 219 each coordinate Mg(2+).

The protein belongs to the TRAFAC class OBG-HflX-like GTPase superfamily. HflX GTPase family. In terms of assembly, monomer. Associates with the 50S ribosomal subunit. It depends on Mg(2+) as a cofactor.

Its subcellular location is the cytoplasm. Its function is as follows. GTPase that associates with the 50S ribosomal subunit and may have a role during protein synthesis or ribosome biogenesis. The chain is GTPase HflX from Thermococcus kodakarensis (strain ATCC BAA-918 / JCM 12380 / KOD1) (Pyrococcus kodakaraensis (strain KOD1)).